Reading from the N-terminus, the 593-residue chain is Proteasome-associated ATPase (593 aa).

Residues 5-94 (DDADSRAARW…KEEIDRLAQP (90 aa)) are a coiled coil. 281–286 (GCGKTL) is a binding site for ATP. Residues 574 to 593 (GKGADAGRSIETASNTGQYL) are disordered. The segment covering 584 to 593 (ETASNTGQYL) has biased composition (polar residues). Positions 592-593 (YL) are docks into pockets in the proteasome alpha-ring.

Belongs to the AAA ATPase family. In terms of assembly, homohexamer. Assembles into a hexameric ring structure that caps the 20S proteasome core. Strongly interacts with the prokaryotic ubiquitin-like protein Pup through a hydrophobic interface; the interacting region of ARC lies in its N-terminal coiled-coil domain. There is one Pup binding site per ARC hexamer ring. Upon ATP-binding, the C-terminus of ARC interacts with the alpha-rings of the proteasome core, possibly by binding to the intersubunit pockets.

It functions in the pathway protein degradation; proteasomal Pup-dependent pathway. Its function is as follows. ATPase which is responsible for recognizing, binding, unfolding and translocation of pupylated proteins into the bacterial 20S proteasome core particle. May be essential for opening the gate of the 20S proteasome via an interaction with its C-terminus, thereby allowing substrate entry and access to the site of proteolysis. Thus, the C-termini of the proteasomal ATPase may function like a 'key in a lock' to induce gate opening and therefore regulate proteolysis. The polypeptide is Proteasome-associated ATPase (Salinispora arenicola (strain CNS-205)).